Here is a 112-residue protein sequence, read N- to C-terminus: MISDKIKLTAKDILEKEFKTGMRGYQQEEVDKFLDMIIKDYEAFHKEFEQLKQQNARLKRELEEQKLVATQVPQQPVVQTPVAQPVYNNTNTDILKRLSNLEKAVFGSKLYE.

Positions 38-72 (IKDYEAFHKEFEQLKQQNARLKRELEEQKLVATQV) form a coiled coil.

It belongs to the GpsB family. Forms polymers through the coiled coil domains. Interacts with PBP1, MreC and EzrA.

The protein localises to the cytoplasm. Functionally, divisome component that associates with the complex late in its assembly, after the Z-ring is formed, and is dependent on DivIC and PBP2B for its recruitment to the divisome. Together with EzrA, is a key component of the system that regulates PBP1 localization during cell cycle progression. Its main role could be the removal of PBP1 from the cell pole after pole maturation is completed. Also contributes to the recruitment of PBP1 to the division complex. Not essential for septum formation. This chain is Cell cycle protein GpsB, found in Bacillus cereus (strain ZK / E33L).